Reading from the N-terminus, the 327-residue chain is HMRNHLGSKPFQCSQCSYSCVNKSMLNSHLKSHSNVYQYRCADCNYATKYCHSLKLHLRKYQHNPAMVLNLDGTPNPLPIIDVYGTRRGPKQKPFSKMFEPQGPVSNNNQPQPPAPTHPIFGNHFPVNLPYLPPLLPHSFLFPPNNNYEQRTSPKNHEIQTEKPQQMSPPASILHQRLSYTERPLESGSTSPPPKSPPSITQTPTHREMPTEHGDDALDLTNAKTSEAGTPPPPTERATPVTPTTALKNRRKGRAFKLQPAALRLQHEDEKMRDADGSDSESDASAEVASSSAASSYTCQFCDITFGDLTMHTIHMGFHGYNDPFMC.

3 consecutive C2H2-type zinc fingers follow at residues His-1–His-5, Phe-11–His-33, and Tyr-39–His-63. Disordered stretches follow at residues Lys-91 to Phe-121, Pro-143 to Pro-170, and Glu-182 to Ser-290. Composition is skewed to basic and acidic residues over residues Thr-205 to Asp-216 and Leu-265 to Asp-276. 2 C2H2-type zinc fingers span residues Tyr-297–His-319 and Phe-325–Cys-327.

This sequence belongs to the hunchback C2H2-type zinc-finger protein family.

The protein localises to the nucleus. Its function is as follows. Gap class segmentation protein that controls development of head structures. This is Protein hunchback (hb) from Manduca sexta (Tobacco hawkmoth).